Consider the following 705-residue polypeptide: tRNA 5-methylaminomethyl-2-thiouridine biosynthesis bifunctional protein MnmC (705 aa).

The interval 1–241 (MTIKTADIQF…KREMLAGIIA (241 aa)) is tRNA (mnm(5)s(2)U34)-methyltransferase. Residues 289-705 (IGAGIAGASM…LIRQLIRREV (417 aa)) form an FAD-dependent cmnm(5)s(2)U34 oxidoreductase region.

In the N-terminal section; belongs to the methyltransferase superfamily. tRNA (mnm(5)s(2)U34)-methyltransferase family. This sequence in the C-terminal section; belongs to the DAO family. The cofactor is FAD.

It localises to the cytoplasm. The enzyme catalyses 5-aminomethyl-2-thiouridine(34) in tRNA + S-adenosyl-L-methionine = 5-methylaminomethyl-2-thiouridine(34) in tRNA + S-adenosyl-L-homocysteine + H(+). Catalyzes the last two steps in the biosynthesis of 5-methylaminomethyl-2-thiouridine (mnm(5)s(2)U) at the wobble position (U34) in tRNA. Catalyzes the FAD-dependent demodification of cmnm(5)s(2)U34 to nm(5)s(2)U34, followed by the transfer of a methyl group from S-adenosyl-L-methionine to nm(5)s(2)U34, to form mnm(5)s(2)U34. The chain is tRNA 5-methylaminomethyl-2-thiouridine biosynthesis bifunctional protein MnmC from Pseudoalteromonas atlantica (strain T6c / ATCC BAA-1087).